A 214-amino-acid polypeptide reads, in one-letter code: Adenylate kinase (214 aa).

An ATP-binding site is contributed by 10–15; the sequence is GGGKGT. An NMP region spans residues 30–59; the sequence is STGDMFRENVKGGTELGLKAKEYMDAGQLV. AMP-binding positions include Thr31, Arg36, 57–59, 85–88, and Gln92; these read QLV and GFPR. The tract at residues 126–163 is LID; that stretch reads GRRVCRVCGATFHVLFNAPKEDGKCDKCGGELYQRSDD. Position 127 (Arg127) interacts with ATP. Cys130 and Cys133 together coordinate Zn(2+). An ATP-binding site is contributed by 136 to 137; that stretch reads TF. Residues Cys150 and Cys153 each contribute to the Zn(2+) site. Arg160 and Arg171 together coordinate AMP. Residue Gln199 coordinates ATP.

The protein belongs to the adenylate kinase family. As to quaternary structure, monomer.

The protein resides in the cytoplasm. It carries out the reaction AMP + ATP = 2 ADP. It participates in purine metabolism; AMP biosynthesis via salvage pathway; AMP from ADP: step 1/1. In terms of biological role, catalyzes the reversible transfer of the terminal phosphate group between ATP and AMP. Plays an important role in cellular energy homeostasis and in adenine nucleotide metabolism. The protein is Adenylate kinase of Desulforudis audaxviator (strain MP104C).